Here is a 132-residue protein sequence, read N- to C-terminus: Ribosome-binding factor A (132 aa).

This sequence belongs to the RbfA family. Monomer. Binds 30S ribosomal subunits, but not 50S ribosomal subunits or 70S ribosomes.

It is found in the cytoplasm. One of several proteins that assist in the late maturation steps of the functional core of the 30S ribosomal subunit. Associates with free 30S ribosomal subunits (but not with 30S subunits that are part of 70S ribosomes or polysomes). Required for efficient processing of 16S rRNA. May interact with the 5'-terminal helix region of 16S rRNA. The polypeptide is Ribosome-binding factor A (Burkholderia vietnamiensis (strain G4 / LMG 22486) (Burkholderia cepacia (strain R1808))).